A 267-amino-acid chain; its full sequence is tRNA pseudouridine synthase A (267 aa).

D53 (nucleophile) is an active-site residue. Y114 is a binding site for substrate.

This sequence belongs to the tRNA pseudouridine synthase TruA family. In terms of assembly, homodimer.

The catalysed reaction is uridine(38/39/40) in tRNA = pseudouridine(38/39/40) in tRNA. Its function is as follows. Formation of pseudouridine at positions 38, 39 and 40 in the anticodon stem and loop of transfer RNAs. The protein is tRNA pseudouridine synthase A of Chlamydia muridarum (strain MoPn / Nigg).